Consider the following 211-residue polypeptide: Probable GTP-binding protein EngB (211 aa).

The region spanning 30 to 204 (EGFEVAFAGR…YTVLAGWMEL (175 aa)) is the EngB-type G domain. Residues 38–45 (GRSNAGKS), 64–68 (GRTQL), 82–85 (DLPG), 149–152 (TKAD), and 182–185 (LFSA) each bind GTP. Mg(2+) is bound by residues Ser45 and Thr66.

Belongs to the TRAFAC class TrmE-Era-EngA-EngB-Septin-like GTPase superfamily. EngB GTPase family. Requires Mg(2+) as cofactor.

Functionally, necessary for normal cell division and for the maintenance of normal septation. This Pseudomonas syringae pv. tomato (strain ATCC BAA-871 / DC3000) protein is Probable GTP-binding protein EngB.